The sequence spans 402 residues: Xylose/arabinose-binding protein XylF (402 aa).

A helical transmembrane segment spans residues 38-58 (GIIAGVLAAFGAGFGSGYVTA).

The protein belongs to the bacterial solute-binding protein 2 family. The complex is composed of two ATP-binding proteins (XylG), two transmembrane proteins (XylH) and a solute-binding protein (XylF).

Its subcellular location is the cell membrane. Functionally, part of the ABC transporter complex XylFGH involved in the uptake of xylose and arabinose. The protein is Xylose/arabinose-binding protein XylF of Sulfolobus acidocaldarius (strain ATCC 33909 / DSM 639 / JCM 8929 / NBRC 15157 / NCIMB 11770).